The sequence spans 95 residues: Transcription and mRNA export factor ENY2-1 (95 aa).

Belongs to the ENY2 family. Component of the nuclear pore complex (NPC)-associated TREX-2 complex (transcription and export complex 2). Component of the SAGA transcription coactivator-HAT complex. Within the SAGA complex, participates in a subcomplex of SAGA called the DUB module (deubiquitination module).

The protein localises to the nucleus. The protein resides in the nucleoplasm. Functionally, involved in mRNA export coupled transcription activation by association with both the TREX-2 and the SAGA complexes. The transcription regulatory histone acetylation (HAT) complex SAGA is a multiprotein complex that activates transcription by remodeling chromatin and mediating histone acetylation and deubiquitination. Within the SAGA complex, participates in a subcomplex that specifically deubiquitinates histones. The SAGA complex is recruited to specific gene promoters by activators, where it is required for transcription. The TREX-2 complex functions in docking export-competent ribonucleoprotein particles (mRNPs) to the nuclear entrance of the nuclear pore complex (nuclear basket). TREX-2 participates in mRNA export and accurate chromatin positioning in the nucleus by tethering genes to the nuclear periphery. This chain is Transcription and mRNA export factor ENY2-1 (eny2-1), found in Salmo salar (Atlantic salmon).